Consider the following 408-residue polypeptide: NADH-quinone oxidoreductase subunit D (408 aa).

Belongs to the complex I 49 kDa subunit family. NDH-1 is composed of 14 different subunits. Subunits NuoB, C, D, E, F, and G constitute the peripheral sector of the complex.

It is found in the cell inner membrane. The catalysed reaction is a quinone + NADH + 5 H(+)(in) = a quinol + NAD(+) + 4 H(+)(out). Functionally, NDH-1 shuttles electrons from NADH, via FMN and iron-sulfur (Fe-S) centers, to quinones in the respiratory chain. The immediate electron acceptor for the enzyme in this species is believed to be ubiquinone. Couples the redox reaction to proton translocation (for every two electrons transferred, four hydrogen ions are translocated across the cytoplasmic membrane), and thus conserves the redox energy in a proton gradient. This Wolinella succinogenes (strain ATCC 29543 / DSM 1740 / CCUG 13145 / JCM 31913 / LMG 7466 / NCTC 11488 / FDC 602W) (Vibrio succinogenes) protein is NADH-quinone oxidoreductase subunit D.